Here is a 169-residue protein sequence, read N- to C-terminus: MIEIEKVREIVERVARDYGLEVVEVEFRGGGKARMLRITIDKPEGVTHDDCSHVSNEVSTILDVEDVVPGASYTLEVSSPGLDRKISKPADFERFTGSLVKVSTREPLDGNRHFEGRLESFADGKLTIDLNAVPQRGQKKQKGPKAPVVERKVEIALADVEKANLVPEI.

The protein belongs to the RimP family.

The protein resides in the cytoplasm. Required for maturation of 30S ribosomal subunits. The sequence is that of Ribosome maturation factor RimP from Koribacter versatilis (strain Ellin345).